The primary structure comprises 63 residues: Large ribosomal subunit protein bL35 (63 aa).

It belongs to the bacterial ribosomal protein bL35 family.

This chain is Large ribosomal subunit protein bL35, found in Thermobifida fusca (strain YX).